The chain runs to 313 residues: Ribosomal RNA small subunit methyltransferase H (313 aa).

Residues 37–39 (GGH), aspartate 57, phenylalanine 83, aspartate 104, and glutamine 111 contribute to the S-adenosyl-L-methionine site.

This sequence belongs to the methyltransferase superfamily. RsmH family.

The protein resides in the cytoplasm. It carries out the reaction cytidine(1402) in 16S rRNA + S-adenosyl-L-methionine = N(4)-methylcytidine(1402) in 16S rRNA + S-adenosyl-L-homocysteine + H(+). Specifically methylates the N4 position of cytidine in position 1402 (C1402) of 16S rRNA. This is Ribosomal RNA small subunit methyltransferase H from Mycoplasmoides gallisepticum (strain R(low / passage 15 / clone 2)) (Mycoplasma gallisepticum).